Here is a 335-residue protein sequence, read N- to C-terminus: MINSNNQVLSEIRFDWNKKEILEILNMPLIDLMWESQIVHRKFNSYNIQLASLFSVKTGGCEENCSYCSQSIYSASEIKSHPQFQVEEVLARAKIAKNEGADRFCMGWAWREIRDGKSFNAMLEMVSGVRDLGMEACVTAGMLTEEQASRLADAGLTAYNHNLDTSPEHYKNIITTRTYQDRLDTIKRVRNAGINVCCGGIIGLGETNGDRASLLEVLSNMNPHPESVPINSLVAIEGTGLEDNQEIDSIEMIRMIATARILMPKSKIRLSAGREKLSKEAQILCFQCGANSIFYGDELLTTSNPSFQSDRKLLKEVGVSFNKDFETCEKTLSSL.

In terms of domain architecture, Radical SAM core spans 46 to 274; the sequence is YNIQLASLFS…KSKIRLSAGR (229 aa). Cys-61, Cys-65, and Cys-68 together coordinate [4Fe-4S] cluster. 4 residues coordinate [2Fe-2S] cluster: Cys-105, Cys-137, Cys-197, and Arg-269.

The protein belongs to the radical SAM superfamily. Biotin synthase family. As to quaternary structure, homodimer. [4Fe-4S] cluster serves as cofactor. Requires [2Fe-2S] cluster as cofactor.

It carries out the reaction (4R,5S)-dethiobiotin + (sulfur carrier)-SH + 2 reduced [2Fe-2S]-[ferredoxin] + 2 S-adenosyl-L-methionine = (sulfur carrier)-H + biotin + 2 5'-deoxyadenosine + 2 L-methionine + 2 oxidized [2Fe-2S]-[ferredoxin]. It participates in cofactor biosynthesis; biotin biosynthesis; biotin from 7,8-diaminononanoate: step 2/2. Catalyzes the conversion of dethiobiotin (DTB) to biotin by the insertion of a sulfur atom into dethiobiotin via a radical-based mechanism. In Prochlorococcus marinus (strain AS9601), this protein is Biotin synthase.